A 91-amino-acid chain; its full sequence is Non-specific lipid-transfer protein 1 (91 aa).

Intrachain disulfides connect C3–C50, C13–C27, C28–C73, and C48–C87.

It belongs to the plant LTP family.

In terms of biological role, plant non-specific lipid-transfer proteins transfer phospholipids as well as galactolipids across membranes. May play a role in wax or cutin deposition in the cell walls of expanding epidermal cells and certain secretory tissues. This chain is Non-specific lipid-transfer protein 1, found in Prunus armeniaca (Apricot).